Reading from the N-terminus, the 199-residue chain is MSSENCFVAENSSLHPESGQENDATSPHFSTRHEGSFQVPVLCAVMNVVFITILIIALIALSVGQYNCPGQYTFSMPSDSHVSSCSEDWVGYQRKCYFISTVKRSWTSAQNACSEHGATLAVIDSEKDMNFLKRYAGREEHWVGLKKEPGHPWKWSNGKEFNNWFNVTGSDKCVFLKNTEVSSMECEKNLYWICNKPYK.

A disordered region spans residues 1-29; the sequence is MSSENCFVAENSSLHPESGQENDATSPHF. The Cytoplasmic segment spans residues 1 to 40; sequence MSSENCFVAENSSLHPESGQENDATSPHFSTRHEGSFQVP. A helical; Signal-anchor for type II membrane protein membrane pass occupies residues 41–61; sequence VLCAVMNVVFITILIIALIAL. Topologically, residues 62–199 are extracellular; that stretch reads SVGQYNCPGQ…LYWICNKPYK (138 aa). Cystine bridges form between C85–C96, C113–C194, and C173–C186. In terms of domain architecture, C-type lectin spans 92–195; that stretch reads YQRKCYFIST…CEKNLYWICN (104 aa). A glycan (N-linked (GlcNAc...) asparagine) is linked at N166.

As to quaternary structure, homodimer; disulfide-linked. Interacts with S100A8 and S100A9. Interacts with galactin-1/LGALS1. Interacts with S1PR1; this interaction mediates S1PR1 degradation. Constitutive Ser/Thr phosphorylation in both mature thymocytes and activated T-lymphocytes. In terms of tissue distribution, expressed on the surface of activated T-cells, B-cells, natural killer cells, neutrophils, eosinophils, epidermal Langerhans cells and platelets.

The protein resides in the cell membrane. Its function is as follows. Transmembrane protein expressed mainly on T-cells resident in mucosa that plays an essential role in immune cell homeostasis. Rapidly expressed on the surface of platelets, T-lymphocytes and NK cells upon activation by various stimuli, such as antigen recognition or cytokine signaling, stimulates different signaling pathways in different cell types. Negatively regulates Th17 cell differentiation through its carbohydrate dependent interaction with galectin-1/LGALS1 present on immature dendritic cells. Association of CD69 cytoplasmic tail with the JAK3/STAT5 signaling pathway regulates the transcription of RORgamma/RORC and, consequently, differentiation toward the Th17 lineage. Also acts via the S100A8/S100A9 complex present on peripheral blood mononuclear cells to promote the conversion of naive CD4 T-cells into regulatory T-cells. Acts as an oxidized low-density lipoprotein (oxLDL) receptor in CD4 T-lymphocytes and negatively regulates the inflammatory response by inducing the expression of PDCD1 through the activation of NFAT. Participates in adipose tissue-derived mesenchymal stem cells (ASCs)-mediated protection against P.aeruginosa infection. Mechanistically, specifically recognizes P.aeruginosa to promote ERK1 activation, followed by granulocyte-macrophage colony-stimulating factor (GM-CSF) and other inflammatory cytokines secretion. In eosinophils, induces IL-10 production through the ERK1/2 pathway. Negatively regulates the chemotactic responses of effector lymphocytes and dendritic cells (DCs) to sphingosine 1 phosphate/S1P by acting as a S1PR1 receptor agonist and facilitating the internalization and degradation of the receptor. This is Early activation antigen CD69 (CD69) from Homo sapiens (Human).